The primary structure comprises 252 residues: Thiazole synthase (252 aa).

Lys98 (schiff-base intermediate with DXP) is an active-site residue. Residues Gly159, 185-186 (AG), and 207-208 (AS) each bind 1-deoxy-D-xylulose 5-phosphate.

The protein belongs to the ThiG family. Homotetramer. Forms heterodimers with either ThiH or ThiS.

It localises to the cytoplasm. It catalyses the reaction [ThiS sulfur-carrier protein]-C-terminal-Gly-aminoethanethioate + 2-iminoacetate + 1-deoxy-D-xylulose 5-phosphate = [ThiS sulfur-carrier protein]-C-terminal Gly-Gly + 2-[(2R,5Z)-2-carboxy-4-methylthiazol-5(2H)-ylidene]ethyl phosphate + 2 H2O + H(+). The protein operates within cofactor biosynthesis; thiamine diphosphate biosynthesis. Its function is as follows. Catalyzes the rearrangement of 1-deoxy-D-xylulose 5-phosphate (DXP) to produce the thiazole phosphate moiety of thiamine. Sulfur is provided by the thiocarboxylate moiety of the carrier protein ThiS. In vitro, sulfur can be provided by H(2)S. The polypeptide is Thiazole synthase (Mycobacterium tuberculosis (strain ATCC 25177 / H37Ra)).